The primary structure comprises 367 residues: RYamide receptor (367 aa).

Topologically, residues 1 to 35 (MDANTTRNESFSLDCELVNPNSTLANVYFLSAVYS) are extracellular. N4, N8, and N21 each carry an N-linked (GlcNAc...) asparagine glycan. A helical transmembrane segment spans residues 36-56 (MYAIIFVVALIGNSFVCYIVL). Residues 57-66 (SSPPMRTVTN) lie on the Cytoplasmic side of the membrane. A helical membrane pass occupies residues 67 to 87 (FFILNLAIGDVLITLLCVPFT). Over 88–113 (SVSLLMQYWPFGGILCPVVNYSQALS) the chain is Extracellular. N107 carries an N-linked (GlcNAc...) asparagine glycan. Residues 114 to 134 (VFVSAYTLVAISIDKYMIIMW) form a helical membrane-spanning segment. Residues 135–143 (PLKPRISKR) lie on the Cytoplasmic side of the membrane. Residues 144 to 164 (FATYIIALVWLIAGITVLPSA) form a helical membrane-spanning segment. The Extracellular portion of the chain corresponds to 165–212 (TFTTLINDENILGTSAYEQCDKYICAEEYSKVGQEYGDLYTKVLMFLQ). The chain crosses the membrane as a helical span at residues 213-233 (YVIPSLVLLFTYTSIGVVIWC). Topologically, residues 234-258 (HRIPGEAENSRDQRIAKNKTKMIKM) are cytoplasmic. The helical transmembrane segment at 259 to 279 (MVTVVCVYTICWLPYNVLMIF) threads the bilayer. Over 280-282 (KEH) the chain is Extracellular. Residues 283–303 (ISGSVMVYLYFPLHGLAMSHA) traverse the membrane as a helical segment. Residues 304–367 (CYNPIIYCYM…EITRAQPTSA (64 aa)) are Cytoplasmic-facing.

It belongs to the G-protein coupled receptor 1 family.

The protein localises to the cell membrane. Its function is as follows. Receptor for the neuropeptides RYamide-1 and RYamide-2. The activity of this receptor is mediated by G proteins which activate a phosphatidyl-inositol-calcium second messenger system. RYamide-2 is the most potent activator. This Tribolium castaneum (Red flour beetle) protein is RYamide receptor.